The sequence spans 107 residues: Prepilin peptidase-dependent protein C (107 aa).

Residues 1–10 (MSASLKNQQG) constitute a propeptide that is removed on maturation. Phe11 is subject to N-methylphenylalanine. Residues 11 to 30 (FSLPEVMLAMVLMVMIVTAL) traverse the membrane as a helical segment.

It is found in the membrane. In terms of biological role, not yet known. This chain is Prepilin peptidase-dependent protein C (ppdC), found in Escherichia coli (strain K12).